Consider the following 463-residue polypeptide: ATP-dependent protease ATPase subunit HslU (463 aa).

ATP-binding positions include isoleucine 19, 61–66 (GVGKTE), aspartate 277, glutamate 341, and arginine 413.

This sequence belongs to the ClpX chaperone family. HslU subfamily. A double ring-shaped homohexamer of HslV is capped on each side by a ring-shaped HslU homohexamer. The assembly of the HslU/HslV complex is dependent on binding of ATP.

Its subcellular location is the cytoplasm. Functionally, ATPase subunit of a proteasome-like degradation complex; this subunit has chaperone activity. The binding of ATP and its subsequent hydrolysis by HslU are essential for unfolding of protein substrates subsequently hydrolyzed by HslV. HslU recognizes the N-terminal part of its protein substrates and unfolds these before they are guided to HslV for hydrolysis. The chain is ATP-dependent protease ATPase subunit HslU from Bacillus anthracis (strain A0248).